Consider the following 1183-residue polypeptide: DNA-directed RNA polymerase subunit beta (1183 aa).

It belongs to the RNA polymerase beta chain family. As to quaternary structure, the RNAP catalytic core consists of 2 alpha, 1 beta, 1 beta' and 1 omega subunit. When a sigma factor is associated with the core the holoenzyme is formed, which can initiate transcription.

The enzyme catalyses RNA(n) + a ribonucleoside 5'-triphosphate = RNA(n+1) + diphosphate. Functionally, DNA-dependent RNA polymerase catalyzes the transcription of DNA into RNA using the four ribonucleoside triphosphates as substrates. The protein is DNA-directed RNA polymerase subunit beta of Staphylococcus aureus (strain JH9).